Reading from the N-terminus, the 525-residue chain is GMP synthase [glutamine-hydrolyzing] (525 aa).

The region spanning 8–207 is the Glutamine amidotransferase type-1 domain; sequence KILILDFGSQ…ALDICGCKAN (200 aa). Cys85 (nucleophile) is an active-site residue. Catalysis depends on residues His181 and Glu183. Residues 208–400 form the GMPS ATP-PPase domain; it reads WKPSSIIEDA…LGLPYNMLYR (193 aa). 235 to 241 is a binding site for ATP; that stretch reads SGGVDSS.

As to quaternary structure, homodimer.

The enzyme catalyses XMP + L-glutamine + ATP + H2O = GMP + L-glutamate + AMP + diphosphate + 2 H(+). Its pathway is purine metabolism; GMP biosynthesis; GMP from XMP (L-Gln route): step 1/1. Functionally, catalyzes the synthesis of GMP from XMP. The protein is GMP synthase [glutamine-hydrolyzing] of Shewanella frigidimarina (strain NCIMB 400).